Reading from the N-terminus, the 112-residue chain is Nitrogen regulatory protein GlnK2 (112 aa).

Residues threonine 29, 38 to 39, valine 64, and 87 to 90 contribute to the ADP site; these read QQ and GDGK. Residues threonine 29, 38 to 39, valine 64, 87 to 90, and 101 to 103 each bind ATP; these read QQ, GDGK, and RIR.

The protein belongs to the P(II) protein family. In terms of assembly, homotrimer. Interacts and forms a complex with Amt2.

The protein localises to the cytoplasm. Binding of adenosine nucleotides results in distinct, cooperative behavior for ATP and ADP. GlnK2 is completely insensitive to 2-oxoglutarate at a low level of intracellular nitrogen. Involved in the regulation of nitrogen metabolism. Regulates the activity of its targets by protein-protein interaction in response to the nitrogen status of the cell. Regulates the activity of the ammonia channel Amt2 via direct interaction. The chain is Nitrogen regulatory protein GlnK2 from Archaeoglobus fulgidus (strain ATCC 49558 / DSM 4304 / JCM 9628 / NBRC 100126 / VC-16).